Consider the following 385-residue polypeptide: MSWQQRIDTALATRRAADALRTRRVVEQGAGRWLTVGDSRYCNFSSNDYLGLSQHPAIVRAWQQGAEQYGVGSGGSGHVSGYTRAHYALESELAEWLGYPRALLFISGFAANQAVIAALTGKEDRIVADKLSHASLLEAASFSPAQLRRFAHNDVSQLAALLDKPCDGQQLAVTEGVFSMDGDSAPLAAIAEQVRRAGAWLLVDDAHGIAVTGHKGRGSCQQQEVKPELLVVTFGKGFGVSGAAVLCSEAVATYFEQFARHLIYSTSMPPAQAVALSAALSVIRGEEGDQRRTALAGLIQRFRHGAAALPGRITHSQSAIQPLIVGDNSRALSLAERLRQKGCWVTAIRPPTVPAGTARLRLTLTAAHQPEDIDRLLEVLHESGE.

A substrate-binding site is contributed by Arg-21. 108 to 109 (GF) serves as a coordination point for pyridoxal 5'-phosphate. His-133 is a substrate binding site. 3 residues coordinate pyridoxal 5'-phosphate: Ser-179, His-207, and Thr-233. N6-(pyridoxal phosphate)lysine is present on Lys-236. Residue Thr-352 coordinates substrate.

It belongs to the class-II pyridoxal-phosphate-dependent aminotransferase family. BioF subfamily. In terms of assembly, homodimer. It depends on pyridoxal 5'-phosphate as a cofactor.

It catalyses the reaction 6-carboxyhexanoyl-[ACP] + L-alanine + H(+) = (8S)-8-amino-7-oxononanoate + holo-[ACP] + CO2. Its pathway is cofactor biosynthesis; biotin biosynthesis. In terms of biological role, catalyzes the decarboxylative condensation of pimeloyl-[acyl-carrier protein] and L-alanine to produce 8-amino-7-oxononanoate (AON), [acyl-carrier protein], and carbon dioxide. The protein is 8-amino-7-oxononanoate synthase of Pseudescherichia vulneris (Escherichia vulneris).